The following is a 113-amino-acid chain: Photosystem II reaction center Psb28 protein (113 aa).

This sequence belongs to the Psb28 family. In terms of assembly, part of the photosystem II complex.

The protein resides in the cellular thylakoid membrane. This Trichodesmium erythraeum (strain IMS101) protein is Photosystem II reaction center Psb28 protein.